An 868-amino-acid chain; its full sequence is DNA topoisomerase 1 (868 aa).

A Toprim domain is found at 3-148 (KSLVIVESPA…RFSRVVFNEI (146 aa)). Mg(2+) is bound by residues Glu-9 and Asp-117. The Topo IA-type catalytic domain occupies 164-581 (NMDRVNAQQT…QFFKDFSSQL (418 aa)). The interaction with DNA stretch occupies residues 198 to 203 (SAGRVQ). Residue Tyr-325 is the O-(5'-phospho-DNA)-tyrosine intermediate of the active site. 3 C4-type zinc fingers span residues 605–636 (CPTC…KERC), 667–694 (CTKC…NPNC), and 716–739 (CDKC…CTNC).

This sequence belongs to the type IA topoisomerase family. In terms of assembly, monomer. Requires Mg(2+) as cofactor.

The catalysed reaction is ATP-independent breakage of single-stranded DNA, followed by passage and rejoining.. Functionally, releases the supercoiling and torsional tension of DNA, which is introduced during the DNA replication and transcription, by transiently cleaving and rejoining one strand of the DNA duplex. Introduces a single-strand break via transesterification at a target site in duplex DNA. The scissile phosphodiester is attacked by the catalytic tyrosine of the enzyme, resulting in the formation of a DNA-(5'-phosphotyrosyl)-enzyme intermediate and the expulsion of a 3'-OH DNA strand. The free DNA strand then undergoes passage around the unbroken strand, thus removing DNA supercoils. Finally, in the religation step, the DNA 3'-OH attacks the covalent intermediate to expel the active-site tyrosine and restore the DNA phosphodiester backbone. The protein is DNA topoisomerase 1 of Haemophilus influenzae (strain ATCC 51907 / DSM 11121 / KW20 / Rd).